The following is a 496-amino-acid chain: Angiopoietin-2 (496 aa).

A signal peptide spans 1–18 (MWQIVFLTFGCDLVLASA). Residues asparagine 89, asparagine 119, asparagine 133, asparagine 151, asparagine 240, and asparagine 304 are each glycosylated (N-linked (GlcNAc...) asparagine). Residues 159–256 (QLLQHSISTN…QQHDLMETVN (98 aa)) adopt a coiled-coil conformation. Positions 280–496 (TFRDCAEIFK…TTMMIRPADF (217 aa)) constitute a Fibrinogen C-terminal domain. Residues cysteine 284 and cysteine 313 are joined by a disulfide bond. 4 residues coordinate Ca(2+): aspartate 429, aspartate 431, cysteine 433, and cysteine 435. Intrachain disulfides connect cysteine 433-cysteine 435 and cysteine 437-cysteine 450.

In terms of assembly, interacts with TEK/TIE2, competing for the same binding site as ANGPT1. Interacts with ITGA5. Interacts with SVEP1/polydom. Interacts with THBD; this interaction significantly inhibits the generation of activated PC and TAFIa/CPB2 by the thrombin/thrombomodulin complex.

It localises to the secreted. In terms of biological role, binds to TEK/TIE2, competing for the ANGPT1 binding site, and modulating ANGPT1 signaling. Can induce tyrosine phosphorylation of TEK/TIE2 in the absence of ANGPT1. In the absence of angiogenic inducers, such as VEGF, ANGPT2-mediated loosening of cell-matrix contacts may induce endothelial cell apoptosis with consequent vascular regression. In concert with VEGF, it may facilitate endothelial cell migration and proliferation, thus serving as a permissive angiogenic signal. Involved in the regulation of lymphangiogenesis. The protein is Angiopoietin-2 (Angpt2) of Rattus norvegicus (Rat).